An 86-amino-acid chain; its full sequence is Large ribosomal subunit protein bL31B (86 aa).

It belongs to the bacterial ribosomal protein bL31 family. Type B subfamily. As to quaternary structure, part of the 50S ribosomal subunit.

The polypeptide is Large ribosomal subunit protein bL31B (Vibrio campbellii (strain ATCC BAA-1116)).